A 297-amino-acid polypeptide reads, in one-letter code: Homoserine kinase (297 aa).

Residue 82 to 92 (PLTRGLGSSAS) participates in ATP binding.

Belongs to the GHMP kinase family. Homoserine kinase subfamily.

The protein localises to the cytoplasm. The catalysed reaction is L-homoserine + ATP = O-phospho-L-homoserine + ADP + H(+). Its pathway is amino-acid biosynthesis; L-threonine biosynthesis; L-threonine from L-aspartate: step 4/5. In terms of biological role, catalyzes the ATP-dependent phosphorylation of L-homoserine to L-homoserine phosphate. In Bacillus cereus (strain ATCC 10987 / NRS 248), this protein is Homoserine kinase.